A 146-amino-acid chain; its full sequence is ATP synthase epsilon chain (146 aa).

A disordered region spans residues Gln103–Glu124.

The protein belongs to the ATPase epsilon chain family. F-type ATPases have 2 components, CF(1) - the catalytic core - and CF(0) - the membrane proton channel. CF(1) has five subunits: alpha(3), beta(3), gamma(1), delta(1), epsilon(1). CF(0) has three main subunits: a, b and c.

It is found in the cell membrane. Functionally, produces ATP from ADP in the presence of a proton gradient across the membrane. This Rubrobacter xylanophilus (strain DSM 9941 / JCM 11954 / NBRC 16129 / PRD-1) protein is ATP synthase epsilon chain.